Consider the following 207-residue polypeptide: Imidazole glycerol phosphate synthase subunit HisH (207 aa).

The Glutamine amidotransferase type-1 domain maps to 1–206; the sequence is MMIVIGYDAG…KEYVYENTAR (206 aa). The Nucleophile role is filled by Cys-79. Active-site residues include His-181 and Glu-183.

In terms of assembly, heterodimer of HisH and HisF.

The protein localises to the cytoplasm. It carries out the reaction 5-[(5-phospho-1-deoxy-D-ribulos-1-ylimino)methylamino]-1-(5-phospho-beta-D-ribosyl)imidazole-4-carboxamide + L-glutamine = D-erythro-1-(imidazol-4-yl)glycerol 3-phosphate + 5-amino-1-(5-phospho-beta-D-ribosyl)imidazole-4-carboxamide + L-glutamate + H(+). The catalysed reaction is L-glutamine + H2O = L-glutamate + NH4(+). Its pathway is amino-acid biosynthesis; L-histidine biosynthesis; L-histidine from 5-phospho-alpha-D-ribose 1-diphosphate: step 5/9. Functionally, IGPS catalyzes the conversion of PRFAR and glutamine to IGP, AICAR and glutamate. The HisH subunit catalyzes the hydrolysis of glutamine to glutamate and ammonia as part of the synthesis of IGP and AICAR. The resulting ammonia molecule is channeled to the active site of HisF. This chain is Imidazole glycerol phosphate synthase subunit HisH, found in Streptococcus gordonii (strain Challis / ATCC 35105 / BCRC 15272 / CH1 / DL1 / V288).